Consider the following 173-residue polypeptide: Adenine phosphoribosyltransferase (173 aa).

The protein belongs to the purine/pyrimidine phosphoribosyltransferase family. As to quaternary structure, homodimer.

It is found in the cytoplasm. It catalyses the reaction AMP + diphosphate = 5-phospho-alpha-D-ribose 1-diphosphate + adenine. Its pathway is purine metabolism; AMP biosynthesis via salvage pathway; AMP from adenine: step 1/1. Catalyzes a salvage reaction resulting in the formation of AMP, that is energically less costly than de novo synthesis. In Thermoanaerobacter pseudethanolicus (strain ATCC 33223 / 39E) (Clostridium thermohydrosulfuricum), this protein is Adenine phosphoribosyltransferase.